A 301-amino-acid chain; its full sequence is MRGLSAVVRVLCVAALAVGVFAAAVLLAGTAGNAKAAGYESLMVPSNAMGRDIPVAFMAGGPHAVYLLDAFNAALDVSNWVTAGNAMTTLGGRGISVVAPAGGAYSMYTNWENDGSKQWDTFLSSELPDWLATKRGLAPDGHAAVGASQGGYAALALAAFHPDRFGFAGSLSGFVYPSSTNYNGAILAGLQQFGGIDGNGMWGAPQLGRWKWHDPYVHASLLAQNNTRVWVYSPMTMGGDIDAMIGQAVASMGSSREFYQQYRSVGGHNGHFDFSGGGDNGWGAWAPQLAAMSGDIVGAIR.

Positions 1 to 36 are cleaved as a signal peptide; sequence MRGLSAVVRVLCVAALAVGVFAAAVLLAGTAGNAKA.

It belongs to the mycobacterial A85 antigen family. In terms of assembly, homodimer.

The protein localises to the secreted. In terms of biological role, may have a role in host tissue attachment, whereby ligands may include the serum protein fibronectin and small sugars. The polypeptide is MPT51 antigen (mpt51) (Mycobacterium leprae (strain TN)).